The chain runs to 397 residues: uncharacterized protein (397 aa).

9 helical membrane-spanning segments follow: residues 1–21 (MGAS…LMLV), 39–59 (VIQS…VVVF), 76–96 (EALS…FGVP), 103–123 (VLLF…FVGA), 124–144 (ALIE…LVMA), 194–214 (MMTP…LFAF), 219–239 (ALFG…FSLL), 255–275 (LVYL…KLML), and 301–321 (QSLT…FWSA).

It belongs to the TerC family.

It localises to the cell membrane. This is an uncharacterized protein from Mycobacterium tuberculosis (strain CDC 1551 / Oshkosh).